Here is a 115-residue protein sequence, read N- to C-terminus: Large ribosomal subunit protein bL20 (115 aa).

This sequence belongs to the bacterial ribosomal protein bL20 family.

In terms of biological role, binds directly to 23S ribosomal RNA and is necessary for the in vitro assembly process of the 50S ribosomal subunit. It is not involved in the protein synthesizing functions of that subunit. The sequence is that of Large ribosomal subunit protein bL20 from Synechococcus sp. (strain CC9311).